Reading from the N-terminus, the 1593-residue chain is Laminin subunit gamma-1 (1593 aa).

The N-terminal stretch at 1-19 (MSLFSCLLLWTLWAACSHG) is a signal peptide. The Laminin N-terminal domain occupies 30-269 (RPQRCMPEFV…AISDFAVGGR (240 aa)). N-linked (GlcNAc...) asparagine glycans are attached at residues Asn-44 and Asn-118. 16 disulfide bridges follow: Cys-270–Cys-279, Cys-272–Cys-289, Cys-291–Cys-300, Cys-303–Cys-323, Cys-326–Cys-335, Cys-328–Cys-351, Cys-354–Cys-363, Cys-366–Cys-379, Cys-382–Cys-394, Cys-384–Cys-400, Cys-402–Cys-411, Cys-414–Cys-426, Cys-429–Cys-440, Cys-431–Cys-447, Cys-449–Cys-458, and Cys-461–Cys-476. Laminin EGF-like domains lie at 270-325 (CKCN…ECLP), 326-381 (CNCN…RCLS), 382-428 (CGCN…GCRP), and 429-478 (CSCN…GCTP). One can recognise a Laminin IV type A domain in the interval 505–673 (RDDEGWKGKQ…PGTPARWVEK (169 aa)). 3 N-linked (GlcNAc...) asparagine glycosylation sites follow: Asn-560, Asn-634, and Asn-654. 24 disulfide bridges follow: Cys-708/Cys-717, Cys-710/Cys-724, Cys-726/Cys-735, Cys-738/Cys-754, Cys-757/Cys-765, Cys-759/Cys-776, Cys-779/Cys-788, Cys-791/Cys-809, Cys-812/Cys-826, Cys-814/Cys-833, Cys-836/Cys-845, Cys-848/Cys-865, Cys-868/Cys-882, Cys-870/Cys-889, Cys-891/Cys-900, Cys-903/Cys-916, Cys-919/Cys-931, Cys-921/Cys-938, Cys-940/Cys-949, Cys-952/Cys-964, Cys-967/Cys-979, Cys-969/Cys-985, Cys-987/Cys-996, and Cys-999/Cys-1012. 6 consecutive Laminin EGF-like domains span residues 708–756 (CNCN…DCKA), 757–811 (CPCP…ACRA), 812–867 (CSCN…KCKP), 868–918 (CKCS…GCER), 919–966 (CNCN…GCKP), and 967–1014 (CDCD…GCQQ). N-linked (GlcNAc...) asparagine glycans are attached at residues Asn-1006, Asn-1091, Asn-1159, Asn-1189, Asn-1207, Asn-1254, Asn-1364, and Asn-1379. The tract at residues 1014–1593 (QCPNCYSLVR…CFNTPSLERP (580 aa)) is domain II and I. Residues 1021-1580 (LVRDKVNQQR…ANLNDIKNTL (560 aa)) adopt a coiled-coil conformation.

Laminin is a complex glycoprotein, consisting of three different polypeptide chains (alpha, beta, gamma), which are bound to each other by disulfide bonds into a cross-shaped molecule comprising one long and three short arms with globules at each end.

The protein localises to the secreted. It localises to the extracellular space. Its subcellular location is the extracellular matrix. It is found in the basement membrane. Binding to cells via a high affinity receptor, laminin is thought to mediate the attachment, migration and organization of cells into tissues during embryonic development by interacting with other extracellular matrix components. This Danio rerio (Zebrafish) protein is Laminin subunit gamma-1 (lamc1).